The sequence spans 178 residues: Large ribosomal subunit protein uL6 (178 aa).

Belongs to the universal ribosomal protein uL6 family. Part of the 50S ribosomal subunit.

In terms of biological role, this protein binds to the 23S rRNA, and is important in its secondary structure. It is located near the subunit interface in the base of the L7/L12 stalk, and near the tRNA binding site of the peptidyltransferase center. This Campylobacter concisus (strain 13826) protein is Large ribosomal subunit protein uL6.